Here is a 390-residue protein sequence, read N- to C-terminus: MRYITAGESHGPQLTVILEGVPAGLTLTAEHINKELLRRQKGHGRGRRMQIETDTVEIVSGVRHGMTLGSPITLIVKNDDFKHWTKVMGAEPISEKESKDMKRTITKPRPGHADLNGAIKYGHRDIRNVLERSSARETTVRVAAGAVAKQILSELGVEIAGHVLEIGGVKAKHISNLSIEEIQTITENSPVRCLDKEVEQEMMNAIDNAKSSGDSIGGIVEVIAEGMPIGVGSYVHYDRKLDAKLAGAIMSINAFKGAEIGVGFEAARQPGSKVHDEILWDEEKGYTRRTNNAGGLEGGMTTGMPIIVRGVMKPIPTLYKPLASVDIDTKEAFQASIERSDSCAVPAAGVVAESVVAWELADALVEQFGKDRMELLKQNIMQHNNYAKEF.

NADP(+)-binding residues include R39 and R45. FMN is bound by residues 132-134 (RSS), 253-254 (NA), G298, 313-317 (KPIPT), and R339.

It belongs to the chorismate synthase family. As to quaternary structure, homotetramer. FMNH2 serves as cofactor.

The enzyme catalyses 5-O-(1-carboxyvinyl)-3-phosphoshikimate = chorismate + phosphate. It functions in the pathway metabolic intermediate biosynthesis; chorismate biosynthesis; chorismate from D-erythrose 4-phosphate and phosphoenolpyruvate: step 7/7. Catalyzes the anti-1,4-elimination of the C-3 phosphate and the C-6 proR hydrogen from 5-enolpyruvylshikimate-3-phosphate (EPSP) to yield chorismate, which is the branch point compound that serves as the starting substrate for the three terminal pathways of aromatic amino acid biosynthesis. This reaction introduces a second double bond into the aromatic ring system. This is Chorismate synthase 2 from Bacillus cereus (strain ATCC 14579 / DSM 31 / CCUG 7414 / JCM 2152 / NBRC 15305 / NCIMB 9373 / NCTC 2599 / NRRL B-3711).